A 228-amino-acid polypeptide reads, in one-letter code: 7-cyano-7-deazaguanine synthase (228 aa).

ATP is bound at residue 10–20; that stretch reads FSGGQDSTTLA. Residues Cys190, Cys205, Cys208, and Cys211 each coordinate Zn(2+).

The protein belongs to the QueC family. It depends on Zn(2+) as a cofactor.

It catalyses the reaction 7-carboxy-7-deazaguanine + NH4(+) + ATP = 7-cyano-7-deazaguanine + ADP + phosphate + H2O + H(+). It functions in the pathway purine metabolism; 7-cyano-7-deazaguanine biosynthesis. In terms of biological role, catalyzes the ATP-dependent conversion of 7-carboxy-7-deazaguanine (CDG) to 7-cyano-7-deazaguanine (preQ(0)). The chain is 7-cyano-7-deazaguanine synthase from Helicobacter pylori (strain HPAG1).